We begin with the raw amino-acid sequence, 204 residues long: AFG2-interacting ribosome maturation factor (204 aa).

In terms of assembly, part of the 55LCC heterohexameric ATPase complex. Does not associate with pre-60S ribosomal particles.

Its subcellular location is the nucleus. It is found in the cytoplasm. Functionally, part of the 55LCC heterohexameric ATPase complex which is chromatin-associated and promotes replisome proteostasis to maintain replication fork progression and genome stability. Required for replication fork progression, sister chromatid cohesion, and chromosome stability. The ATPase activity is specifically enhanced by replication fork DNA and is coupled to cysteine protease-dependent cleavage of replisome substrates in response to replication fork damage. Uses ATPase activity to process replisome substrates in S-phase, facilitating their proteolytic turnover from chromatin to ensure DNA replication and mitotic fidelity. Involved in the cytoplasmic maturation steps of pre-60S ribosomal particles by promoting the release of shuttling protein RSL24D1/RLP24 from the pre-ribosomal particles. The polypeptide is AFG2-interacting ribosome maturation factor (airim) (Xenopus tropicalis (Western clawed frog)).